The primary structure comprises 208 residues: WEB family protein At2g17940 (208 aa).

The stretch at 78–113 (RTLQLNTSLSNRIKTLTQELELGKKEIQRLSRTRSS) forms a coiled coil.

The protein belongs to the WEB family.

The protein is WEB family protein At2g17940 of Arabidopsis thaliana (Mouse-ear cress).